The chain runs to 98 residues: Mu-type opioid receptor (98 aa).

Over 1–9 (YTKMKTATN) the chain is Cytoplasmic. The helical transmembrane segment at 10–34 (IYIFNLALADALATSTLPFQSVNYL) threads the bilayer. Over 35–45 (MGTWPFGTILC) the chain is Extracellular. A helical transmembrane segment spans residues 46 to 68 (KIVISIDYYNMFTSIFTLCTMSV). Over 69 to 88 (DRYIAVCHPVKALDFRTPRN) the chain is Cytoplasmic. At Y71 the chain carries Phosphotyrosine. The chain crosses the membrane as a helical span at residues 89-98 (AKTVNVCNWI).

Belongs to the G-protein coupled receptor 1 family. As to quaternary structure, forms homooligomers and heterooligomers with other GPCRs, such as OPRD1, OPRK1, OPRL1, NPFFR2, ADRA2A, SSTR2, CNR1 and CCR5 (probably in dimeric forms). Interacts with heterotrimeric G proteins; interaction with a heterotrimeric complex containing GNAI1, GNB1 and GNG2 stabilizes the active conformation of the receptor and increases its affinity for endomorphin-2, the synthetic opioid peptide DAMGO and for morphinan agonists. Interacts with PPL; the interaction disrupts agonist-mediated G-protein activation. Interacts (via C-terminus) with DNAJB4 (via C-terminus). Interacts with calmodulin; the interaction inhibits the constitutive activity of OPRM1; it abolishes basal and attenuates agonist-stimulated G-protein coupling. Interacts with FLNA, PLD2, RANBP9 and WLS and GPM6A. Interacts with RTP4. Interacts with SYP and GNAS. Interacts with RGS9, RGS17, RGS20, RGS4, PPP1R9B and HINT1. In terms of processing, phosphorylated. Differentially phosphorylated in basal and agonist-induced conditions. Agonist-mediated phosphorylation modulates receptor internalization. Phosphorylated by GRK2 in a agonist-dependent manner. Phosphorylated on tyrosine residues; the phosphorylation is involved in agonist-induced G-protein-independent receptor down-regulation. Post-translationally, phosphorylated. Differentially phosphorylated in basal and agonist-induced conditions. Agonist-mediated phosphorylation modulates receptor internalization. Phosphorylated by GRK2 in a agonist-dependent manner. Phosphorylated on tyrosine residues; the phosphorylation is involved in agonist-induced G-protein-independent receptor down-regulation. Ubiquitinated. A basal ubiquitination seems not to be related to degradation. Ubiquitination is increased upon formation of OPRM1:OPRD1 oligomers leading to proteasomal degradation; the ubiquitination is diminished by RTP4.

It is found in the cell membrane. The protein resides in the cell projection. Its subcellular location is the axon. The protein localises to the perikaryon. It localises to the dendrite. It is found in the endosome. Receptor for endogenous opioids such as beta-endorphin and endomorphin. Receptor for natural and synthetic opioids including morphine, heroin, DAMGO, fentanyl, etorphine, buprenorphin and methadone. Also activated by enkephalin peptides, such as Met-enkephalin or Met-enkephalin-Arg-Phe, with higher affinity for Met-enkephalin-Arg-Phe. Agonist binding to the receptor induces coupling to an inactive GDP-bound heterotrimeric G-protein complex and subsequent exchange of GDP for GTP in the G-protein alpha subunit leading to dissociation of the G-protein complex with the free GTP-bound G-protein alpha and the G-protein beta-gamma dimer activating downstream cellular effectors. The agonist- and cell type-specific activity is predominantly coupled to pertussis toxin-sensitive G(i) and G(o) G alpha proteins, GNAI1, GNAI2, GNAI3 and GNAO1, and to a lesser extent to pertussis toxin-insensitive G alpha proteins GNAZ and GNA15. They mediate an array of downstream cellular responses, including inhibition of adenylate cyclase activity and both N-type and L-type calcium channels, activation of inward rectifying potassium channels, mitogen-activated protein kinase (MAPK), phospholipase C (PLC), phosphoinositide/protein kinase (PKC), phosphoinositide 3-kinase (PI3K) and regulation of NF-kappa-B. Also couples to adenylate cyclase stimulatory G alpha proteins. The selective temporal coupling to G-proteins and subsequent signaling can be regulated by RGSZ proteins, such as RGS9, RGS17 and RGS4. Phosphorylation by members of the GPRK subfamily of Ser/Thr protein kinases and association with beta-arrestins is involved in short-term receptor desensitization. Beta-arrestins associate with the GPRK-phosphorylated receptor and uncouple it from the G-protein thus terminating signal transduction. The phosphorylated receptor is internalized through endocytosis via clathrin-coated pits which involves beta-arrestins. The activation of the ERK pathway occurs either in a G-protein-dependent or a beta-arrestin-dependent manner and is regulated by agonist-specific receptor phosphorylation. Acts as a class A G-protein coupled receptor (GPCR) which dissociates from beta-arrestin at or near the plasma membrane and undergoes rapid recycling. Receptor down-regulation pathways are varying with the agonist and occur dependent or independent of G-protein coupling. Endogenous ligands induce rapid desensitization, endocytosis and recycling. Heterooligomerization with other GPCRs can modulate agonist binding, signaling and trafficking properties. Involved in neurogenesis. In Cavia porcellus (Guinea pig), this protein is Mu-type opioid receptor (OPRM1).